A 387-amino-acid polypeptide reads, in one-letter code: F-box only protein 4 (387 aa).

Phosphoserine occurs at positions 11, 12, and 48. The F-box domain maps to 56 to 102; the sequence is ASSLTRLPIDVQLYILSFLSPHDLCQLGSTSRYWNETVRDPILWRYF.

In terms of assembly, homodimer. Part of the SCF (SKP1-CUL1-F-box) E3 ubiquitin-protein ligase complex SCF(FBXO4) formed of CUL1, SKP1, RBX1 and FBXO4. Interacts with TERF1; this interaction is prevented in the presence of GNL3L. Identified in a complex with CRYAB and CCND1. Phosphorylation at Ser-11 varies during the cell cycle. It is low in resting cells and high in the S phase and the G2/M phase of the cell cycle. Phosphorylation is decreased during late G1 phase. Phosphorylation at Ser-11 promotes homodimerization and is necessary for optimal ubiquitin ligase activity towards CCND1.

Its subcellular location is the cytoplasm. It participates in protein modification; protein ubiquitination. Substrate recognition component of a SCF (SKP1-CUL1-F-box protein) E3 ubiquitin-protein ligase complex that mediates the ubiquitination and subsequent proteasomal degradation of target proteins. Promotes ubiquitination of cyclin-D1 (CCND1) and its subsequent proteasomal degradation. However, it does not act as a major regulator of CCND1 stability during the G1/S transition. Recognizes TERF1 and promotes its ubiquitination together with UBE2D1. Promotes ubiquitination of FXR1 following phosphorylation of FXR1 by GSK3B, leading to FXR1 degradation by the proteasome. This Bos taurus (Bovine) protein is F-box only protein 4 (FBXO4).